A 427-amino-acid polypeptide reads, in one-letter code: Homeotic protein caudal (427 aa).

Residues Gln104 to Lys273 are disordered. Residues Ala116 to Gly129 show a composition bias toward low complexity. A compositionally biased stretch (gly residues) spans Gly145–Gly164. A compositionally biased stretch (polar residues) spans Ile183 to Ala195. The segment covering His209–Asn243 has biased composition (low complexity). Thr245 is modified (phosphothreonine). The Antp-type hexapeptide signature appears at Tyr252–Lys257. A DNA-binding region (homeobox) is located at residues Lys273–Asn332.

Belongs to the Caudal homeobox family. In terms of tissue distribution, maternally localized in an anteroposterior gradient in the syncytial blastoderm. Also expressed in the pole cells. Zygotically localized in the primordia of the terminal abdominal segment, the hindgut and in the posterior midgut rudiment. Expressed in the gut, the gonads and parts of the genital disks of third instar larvae (at protein level).

Its subcellular location is the nucleus. Functionally, caudal (cad) is one of a number of transcription factors controlling segmentation of the embryo. Further transcriptional regulation via a 5' flanking region containing DNA replication-related elements (DRE) and by dref also regulated by trh and tgo via the CNS midline element. Alongside Bicoid (bcd), caudal forms concentration gradients down the anterior-posterior (A-P) axis providing positional information and subsequent induction of the gap genes. Plays a role in gastrulation/germ band extension, hindgut morphogenesis, positive regulation of cell proliferation, genital disk development and pattern formation. Acts as a key regulator of the Hox gene network and activates transcription via the downstream core promoter element (DPE) relative to the TATA box. Plays a role in the establishment of the hindgut and in the invagination of the hindgut primordium during gastrulation. These effects on the gut are achieved by acting combinatorially at the posterior of the embryo to activate transcription of different targets including fog, fkh and wg. Caudal is involved in regulation of proliferation through transactivation of the E2F gene. Postembryonically its function is mostly restricted to the intestine where it regulates antimicrobial peptide (AMP) levels preserving the normal gut flora. The polypeptide is Homeotic protein caudal (cad) (Drosophila melanogaster (Fruit fly)).